The following is a 254-amino-acid chain: Putative epimerase LsrE (254 aa).

A helical transmembrane segment spans residues V14 to L34. A divalent metal cation is bound by residues H50, D52, and H81. The Proton acceptor role is filled by D52. Substrate is bound by residues H81, G166–S169, D199–S201, and G221–S222. D199 is a binding site for a divalent metal cation. The active-site Proton donor is D199.

It belongs to the ribulose-phosphate 3-epimerase family. A divalent metal cation is required as a cofactor.

The protein localises to the cell membrane. The protein is Putative epimerase LsrE (lsrE) of Salmonella choleraesuis (strain SC-B67).